A 450-amino-acid polypeptide reads, in one-letter code: Chromosomal replication initiator protein DnaA (450 aa).

The segment at 1 to 77 (MTENEQIFWN…EVYNAQIAVD (77 aa)) is domain I, interacts with DnaA modulators. A domain II region spans residues 77 to 109 (DYVYEDDLMIEQQHQGQQGYTEQAFQQLPAVQS). Positions 110–328 (DLNPKYSFDN…GALKDISLVA (219 aa)) are domain III, AAA+ region. The ATP site is built by Gly154, Gly156, Lys157, and Thr158. Residues 329 to 450 (NFKQIDTITV…EIETIKNKIK (122 aa)) are domain IV, binds dsDNA.

It belongs to the DnaA family. As to quaternary structure, oligomerizes as a right-handed, spiral filament on DNA at oriC.

The protein resides in the cytoplasm. Functionally, plays an essential role in the initiation and regulation of chromosomal replication. ATP-DnaA binds to the origin of replication (oriC) to initiate formation of the DNA replication initiation complex once per cell cycle. Binds the DnaA box (a 9 base pair repeat at the origin) and separates the double-stranded (ds)DNA. Forms a right-handed helical filament on oriC DNA; dsDNA binds to the exterior of the filament while single-stranded (ss)DNA is stabiized in the filament's interior. The ATP-DnaA-oriC complex binds and stabilizes one strand of the AT-rich DNA unwinding element (DUE), permitting loading of DNA polymerase. After initiation quickly degrades to an ADP-DnaA complex that is not apt for DNA replication. Binds acidic phospholipids. In Streptococcus equi subsp. equi (strain 4047), this protein is Chromosomal replication initiator protein DnaA.